The sequence spans 393 residues: MDENESNQSLMTSSQYPKEAVRKRQNSARNSGASDSSRFSRKSFKLDYRLEEDVTKSKKGKDGRFVNPWPTWKNPSIPNVLRWLIMEKDHSSVPSSKEELDKELPVLKPYFITNPEEAGVREAGLRVTWLGHATVMVEMDELIFLTDPIFSSRASPSQYMGPKRFRRSPCTISELPPIDAVLISHNHYDHLDYNSVIALNERFGNELRWFVPLGLLDWMQKCGCENVIELDWWEENCVPGHDKVTFVFTPSQHWCKRTLMDDNKVLWGSWSVLGPWNRFFFAGDTGYCPAFEEIGKRFGPFDLAAIPIGAYEPRWFMKYQHVDPEEAVRIHTDVQTKKSMAIHWGTFALANEHYLEPPVKLNEALERYGLNAEDFFVLKHGESRYLNNDDENF.

Met-1 bears the N-acetylmethionine mark. The span at Met-1–Tyr-16 shows a compositional bias: polar residues. The segment at Met-1–Ser-40 is disordered. The Zn(2+) site is built by His-185 and His-187. Tyr-188 is an an N-acyl-1,2-diacyl-sn-glycero-3-phosphoethanolamine binding site. Zn(2+)-binding residues include Asp-189, His-190, and His-253. Deoxycholate contacts are provided by Lys-256 and Met-260. Asp-284 is a binding site for Zn(2+). His-321 provides a ligand contact to an N-acyl-1,2-diacyl-sn-glycero-3-phosphoethanolamine. His-343 provides a ligand contact to Zn(2+). Ala-348 lines the deoxycholate pocket.

This sequence belongs to the NAPE-PLD family. In terms of assembly, homodimer. Bile acids promote the assembly of inactive monomers into an active dimer and enable catalysis. Zn(2+) serves as cofactor. Widely expressed. Highest expression in brain, kidney and testis (at protein level). Expressed in adipose tissue (at protein level).

It is found in the golgi apparatus membrane. The protein resides in the early endosome membrane. The protein localises to the nucleus envelope. Its subcellular location is the nucleus. It localises to the nucleoplasm. The enzyme catalyses an N-acyl-1,2-diacyl-sn-glycero-3-phosphoethanolamine + H2O = an N-acylethanolamine + a 1,2-diacyl-sn-glycero-3-phosphate + H(+). The catalysed reaction is N-butanoyl-1-hexadecanoyl-2-(9Z,12Z-octadecadienoyl)-sn-glycero-3-phosphoethanolamine + H2O = N-butanoyl ethanolamine + 1-hexadecanoyl-2-(9Z,12Z-octadecadienoyl)-sn-glycero-3-phosphate + H(+). It carries out the reaction N-hexanoyl-1-hexadecanoyl-2-(9Z,12Z-octadecadienoyl)-sn-glycero-3-phosphoethanolamine + H2O = N-hexanoyl ethanolamine + 1-hexadecanoyl-2-(9Z,12Z-octadecadienoyl)-sn-glycero-3-phosphate + H(+). It catalyses the reaction N-octanoyl-1-hexadecanoyl-2-(9Z,12Z-octadecadienoyl)-sn-glycero-3-phosphoethanolamine + H2O = N-octanoyl ethanolamine + 1-hexadecanoyl-2-(9Z,12Z-octadecadienoyl)-sn-glycero-3-phosphate + H(+). The enzyme catalyses N-decanoyl-1-hexadecanoyl-2-(9Z,12Z-octadecadienoyl)-sn-glycero-3-phosphoethanolamine + H2O = N-decanoyl ethanolamine + 1-hexadecanoyl-2-(9Z,12Z-octadecadienoyl)-sn-glycero-3-phosphate + H(+). The catalysed reaction is N-dodecanoyl-1,2-di-(9Z-octadecenoyl)-sn-glycero-3-phosphoethanolamine + H2O = N-dodecanoylethanolamine + 1,2-di-(9Z-octadecenoyl)-sn-glycero-3-phosphate + H(+). It carries out the reaction N-tetradecanoyl-1,2-di-(9Z-octadecenoyl)-sn-glycero-3-phosphoethanolamine + H2O = N-tetradecanoylethanolamine + 1,2-di-(9Z-octadecenoyl)-sn-glycero-3-phosphate + H(+). It catalyses the reaction N-hexadecanoyl-1,2-di-(9Z-octadecenoyl)-sn-glycero-3-phosphoethanolamine + H2O = N-hexadecanoylethanolamine + 1,2-di-(9Z-octadecenoyl)-sn-glycero-3-phosphate + H(+). The enzyme catalyses N,1-dihexadecanoyl-2-(9Z,12Z-octadecadienoyl)-sn-glycero-3-phosphoethanolamine + H2O = 1-hexadecanoyl-2-(9Z,12Z-octadecadienoyl)-sn-glycero-3-phosphate + N-hexadecanoylethanolamine + H(+). The catalysed reaction is N-octadecanoyl-1,2-di-(9Z-octadecenoyl)-sn-glycero-3-phosphoethanolamine + H2O = N-octadecanoyl ethanolamine + 1,2-di-(9Z-octadecenoyl)-sn-glycero-3-phosphate + H(+). It carries out the reaction N,1,2-tri-(9Z-octadecenoyl)-sn-glycero-3-phosphoethanolamine + H2O = N-(9Z-octadecenoyl) ethanolamine + 1,2-di-(9Z-octadecenoyl)-sn-glycero-3-phosphate + H(+). It catalyses the reaction N-(5Z,8Z,11Z,14Z-eicosatetraenoyl)-1,2-diacyl-sn-glycero-3-phosphoethanolamine + H2O = N-(5Z,8Z,11Z,14Z-eicosatetraenoyl)-ethanolamine + a 1,2-diacyl-sn-glycero-3-phosphate + H(+). The enzyme catalyses N-(5Z,8Z,11Z,14Z-eicosatetraenoyl)-1,2-di-(9Z-octadecenoyl)-sn-glycero-3-phosphoethanolamine + H2O = N-(5Z,8Z,11Z,14Z-eicosatetraenoyl)-ethanolamine + 1,2-di-(9Z-octadecenoyl)-sn-glycero-3-phosphate + H(+). The catalysed reaction is 1-O-(1Z-octadecenoyl)-2-(9Z-octadecenoyl)-sn-glycero-3-phospho-N-hexadecanoyl-ethanolamine + H2O = 1-O-(1Z-octadecenoyl)-2-(9Z-octadecenoyl)-sn-glycero-3-phosphate + N-hexadecanoylethanolamine + H(+). It carries out the reaction N,1-diacyl-sn-glycero-3-phosphoethanolamine + H2O = an N-acylethanolamine + a 1-acyl-sn-glycero-3-phosphate + H(+). It catalyses the reaction N,1-dihexadecanoyl-sn-glycero-3-phosphoethanolamine + H2O = N-hexadecanoylethanolamine + 1-hexadecanoyl-sn-glycero-3-phosphate + H(+). The enzyme catalyses N-(5Z,8Z,11Z,14Z-eicosatetraenoyl)-1-(9Z-octadecenoyl)-sn-glycero-3-phosphoethanolamine + H2O = N-(5Z,8Z,11Z,14Z-eicosatetraenoyl)-ethanolamine + 1-(9Z-octadecenoyl)-sn-glycero-3-phosphate + H(+). Activated by divalent cations. Activated by bile acids and their conjugates, except for lithocholic acid which is rather inhibitory. Binding of deoxycholic acid favors the selective release of anandamide and likely other unsatured long FAEs. Inhibited by phosphatidylethanolamines. D-type phospholipase that hydrolyzes N-acyl-phosphatidylethanolamines (NAPEs) to produce bioactive N-acylethanolamines/fatty acid ethanolamides (NAEs/FAEs) and phosphatidic acid. Cleaves the terminal phosphodiester bond of diacyl- and alkenylacyl-NAPEs, primarily playing a role in the generation of long-chain saturated and monounsaturated NAEs in the brain. May control NAPE homeostasis in dopaminergic neuron membranes and regulate neuron survival, partly through RAC1 activation. As a regulator of lipid metabolism in the adipose tissue, mediates the crosstalk between adipocytes, gut microbiota and immune cells to control body temperature and weight. In particular, regulates energy homeostasis by promoting cold-induced brown or beige adipocyte differentiation program to generate heat from fatty acids and glucose. Has limited D-type phospholipase activity toward N-acyl lyso-NAPEs. This Homo sapiens (Human) protein is N-acyl-phosphatidylethanolamine-hydrolyzing phospholipase D (NAPEPLD).